The primary structure comprises 345 residues: Alanine racemase (345 aa).

The Proton acceptor; specific for D-alanine role is filled by lysine 33. N6-(pyridoxal phosphate)lysine is present on lysine 33. Arginine 128 is a binding site for substrate. The Proton acceptor; specific for L-alanine role is filled by tyrosine 242. Position 291 (methionine 291) interacts with substrate.

The protein belongs to the alanine racemase family. Pyridoxal 5'-phosphate serves as cofactor.

The enzyme catalyses L-alanine = D-alanine. It functions in the pathway amino-acid biosynthesis; D-alanine biosynthesis; D-alanine from L-alanine: step 1/1. In terms of biological role, catalyzes the interconversion of L-alanine and D-alanine. May also act on other amino acids. This Ruegeria sp. (strain TM1040) (Silicibacter sp.) protein is Alanine racemase (alr).